The primary structure comprises 529 residues: Listeriolysin O (529 aa).

Residues M1–A24 form the signal peptide. The disordered stretch occupies residues S35–E54. A run of 4 beta stranded transmembrane segments spans residues E214–A227, V234–K243, S312–A321, and S329–S341. Residues E483–R493 carry the Conserved undecapeptide motif. Positions T515–L516 match the Cholesterol binding motif.

It belongs to the cholesterol-dependent cytolysin family. As to quaternary structure, homooligomeric pore complex of 35 to 50 subunits; when inserted in the host membrane.

It is found in the secreted. The protein localises to the host membrane. Its subcellular location is the host cell membrane. With respect to regulation, activity of listeriolysin O is regulated on multiple levels. It should be high in the phagosome, thereby allowing escape of the bacteria from the phagosomal compartment. Then, once inside the host cytosol, the activity must be controlled to prevent lysis of the host plasma membrane and loss of the intracellular environment. Its function is as follows. A cholesterol-dependent toxin that causes cytolysis by forming pores in cholesterol containing host membranes. After binding to target membranes, the protein undergoes a major conformation change, leading to its insertion in the host membrane and formation of an oligomeric pore complex. Cholesterol is required for binding to host membranes, membrane insertion and pore formation; cholesterol binding is mediated by a Thr-Leu pair in the C-terminus. Acts as a major virulence factor required for the escape of bacteria from phagosomal vacuoles and entry into the host cytosol. Can be reversibly inactivated by oxidation. The chain is Listeriolysin O (hly) from Listeria monocytogenes serotype 1/2a (strain 08-5578).